Reading from the N-terminus, the 245-residue chain is 5-oxoprolinase subunit A (245 aa).

It belongs to the LamB/PxpA family. Forms a complex composed of PxpA, PxpB and PxpC.

The enzyme catalyses 5-oxo-L-proline + ATP + 2 H2O = L-glutamate + ADP + phosphate + H(+). Functionally, catalyzes the cleavage of 5-oxoproline to form L-glutamate coupled to the hydrolysis of ATP to ADP and inorganic phosphate. The protein is 5-oxoprolinase subunit A of Yersinia pseudotuberculosis serotype O:1b (strain IP 31758).